Here is a 391-residue protein sequence, read N- to C-terminus: Formate-dependent phosphoribosylglycinamide formyltransferase (391 aa).

N(1)-(5-phospho-beta-D-ribosyl)glycinamide is bound by residues 18-19 (EL) and E78. Residues R110, K151, 156–161 (SSGKGQ), 191–194 (EEFI), and E199 each bind ATP. Residues 115–305 (DLAAQQLGLR…EFELHLRAVL (191 aa)) enclose the ATP-grasp domain. E264 and E276 together coordinate Mg(2+). N(1)-(5-phospho-beta-D-ribosyl)glycinamide-binding positions include D283, K353, and 360–361 (RR).

This sequence belongs to the PurK/PurT family. Homodimer.

The enzyme catalyses N(1)-(5-phospho-beta-D-ribosyl)glycinamide + formate + ATP = N(2)-formyl-N(1)-(5-phospho-beta-D-ribosyl)glycinamide + ADP + phosphate + H(+). The protein operates within purine metabolism; IMP biosynthesis via de novo pathway; N(2)-formyl-N(1)-(5-phospho-D-ribosyl)glycinamide from N(1)-(5-phospho-D-ribosyl)glycinamide (formate route): step 1/1. Involved in the de novo purine biosynthesis. Catalyzes the transfer of formate to 5-phospho-ribosyl-glycinamide (GAR), producing 5-phospho-ribosyl-N-formylglycinamide (FGAR). Formate is provided by PurU via hydrolysis of 10-formyl-tetrahydrofolate. This is Formate-dependent phosphoribosylglycinamide formyltransferase from Synechococcus elongatus (strain ATCC 33912 / PCC 7942 / FACHB-805) (Anacystis nidulans R2).